We begin with the raw amino-acid sequence, 340 residues long: Protein S-acyltransferase 10 (340 aa).

Transmembrane regions (helical) follow at residues 34-54 (LLLK…LFLF) and 66-86 (PWYM…YFVT). One can recognise a DHHC domain in the interval 162-212 (LTCGYCHVEQPPRTKHCHDCDRCVLQFDHHCVWLGTCIGQKNHSKFWWYIC). Cysteine 192 acts as the S-palmitoyl cysteine intermediate in catalysis. 2 helical membrane passes run 207 to 227 (FWWY…MYVD) and 241 to 261 (IIIL…LLLI).

It belongs to the DHHC palmitoyltransferase family. As to expression, expressed in mature embryos, embryo sacs, cotyledons, whole seedlings, hydathodes, guard cells, sites of lateral root initiation, root tips and phloem, but not in xylem.

The protein resides in the vacuole membrane. The catalysed reaction is L-cysteinyl-[protein] + hexadecanoyl-CoA = S-hexadecanoyl-L-cysteinyl-[protein] + CoA. S-acyltransferase involved in protein lipid modification. Catalyzes the palmitoylation of proteins peripheral or integral to the tonoplast. Required for the tonoplast localization of CBL2, CBL3 and CBL6, but not for the plasma membrane localization of CBL9, for the endosome localization of RABF1 or for the endomembrane localization of RABF2B. The polypeptide is Protein S-acyltransferase 10 (PAT10) (Arabidopsis thaliana (Mouse-ear cress)).